Here is a 474-residue protein sequence, read N- to C-terminus: PRAME family member 2 (474 aa).

The LRR 1; degenerate repeat unit spans residues 97–124; that stretch reads RWKLQVLDLRDVDENFWARWPGAWALSC. The LRR 2; degenerate repeat unit spans residues 179–203; that stretch reads HLCCSKLVNYLTPIKYLRKSLKIIY. Residues 204 to 230 form an LRR 3; degenerate repeat; sequence INSIGELEIHNTCWPHLIRKLYCYLKE. An LRR 4; degenerate repeat occupies 231–265; sequence MKTLCKLVFSRCHHYTSDNELEGWLVTRFTSVFLR. LRR repeat units follow at residues 266–291, 292–323, 324–342, 348–375, and 376–400; these read LEHL…IRCL, QNPL…GYLK, HLNL…PLGA, AASL…GLSC, and CSQL…LLRH.

The protein belongs to the PRAME family.

The protein is PRAME family member 2 of Homo sapiens (Human).